Reading from the N-terminus, the 381-residue chain is Cobalt-precorrin-5B C(1)-methyltransferase (381 aa).

Belongs to the CbiD family.

The enzyme catalyses Co-precorrin-5B + S-adenosyl-L-methionine = Co-precorrin-6A + S-adenosyl-L-homocysteine. It functions in the pathway cofactor biosynthesis; adenosylcobalamin biosynthesis; cob(II)yrinate a,c-diamide from sirohydrochlorin (anaerobic route): step 6/10. Its function is as follows. Catalyzes the methylation of C-1 in cobalt-precorrin-5B to form cobalt-precorrin-6A. This Clostridium botulinum (strain Eklund 17B / Type B) protein is Cobalt-precorrin-5B C(1)-methyltransferase.